Here is a 123-residue protein sequence, read N- to C-terminus: Large ribosomal subunit protein bL12 (123 aa).

The protein belongs to the bacterial ribosomal protein bL12 family. In terms of assembly, homodimer. Part of the ribosomal stalk of the 50S ribosomal subunit. Forms a multimeric L10(L12)X complex, where L10 forms an elongated spine to which 2 to 4 L12 dimers bind in a sequential fashion. Binds GTP-bound translation factors.

Forms part of the ribosomal stalk which helps the ribosome interact with GTP-bound translation factors. Is thus essential for accurate translation. The chain is Large ribosomal subunit protein bL12 from Roseobacter denitrificans (strain ATCC 33942 / OCh 114) (Erythrobacter sp. (strain OCh 114)).